The sequence spans 206 residues: Large ribosomal subunit protein uL4 (206 aa).

The protein belongs to the universal ribosomal protein uL4 family. As to quaternary structure, part of the 50S ribosomal subunit.

Functionally, one of the primary rRNA binding proteins, this protein initially binds near the 5'-end of the 23S rRNA. It is important during the early stages of 50S assembly. It makes multiple contacts with different domains of the 23S rRNA in the assembled 50S subunit and ribosome. Forms part of the polypeptide exit tunnel. The sequence is that of Large ribosomal subunit protein uL4 from Methylobacterium radiotolerans (strain ATCC 27329 / DSM 1819 / JCM 2831 / NBRC 15690 / NCIMB 10815 / 0-1).